The primary structure comprises 1111 residues: Phytochrome C (1111 aa).

The region spanning 213-393 (NMLLLCDALV…VFGVQINKEA (181 aa)) is the GAF domain. Cys318 contributes to the phytochromobilin binding site. 2 consecutive PAS domains span residues 604–674 (IVNE…LEGS) and 737–808 (DYAR…TKLR). The Histidine kinase domain occupies 889–1111 (YLRHEVKDPE…FVILTEFPLI (223 aa)).

This sequence belongs to the phytochrome family. Homodimer. In terms of processing, contains one covalently linked phytochromobilin chromophore.

In terms of biological role, regulatory photoreceptor which exists in two forms that are reversibly interconvertible by light: the Pr form that absorbs maximally in the red region of the spectrum and the Pfr form that absorbs maximally in the far-red region. Photoconversion of Pr to Pfr induces an array of morphogenic responses, whereas reconversion of Pfr to Pr cancels the induction of those responses. Pfr controls the expression of a number of nuclear genes including those encoding the small subunit of ribulose-bisphosphate carboxylase, chlorophyll A/B binding protein, protochlorophyllide reductase, rRNA, etc. It also controls the expression of its own gene(s) in a negative feedback fashion. In Arabidopsis thaliana (Mouse-ear cress), this protein is Phytochrome C (PHYC).